Here is a 320-residue protein sequence, read N- to C-terminus: Endolytic peptidoglycan transglycosylase RlpA (320 aa).

It belongs to the RlpA family.

Functionally, lytic transglycosylase with a strong preference for naked glycan strands that lack stem peptides. The sequence is that of Endolytic peptidoglycan transglycosylase RlpA from Rickettsia prowazekii (strain Madrid E).